The chain runs to 221 residues: UPF0758 protein HI_0952 (221 aa).

An MPN domain is found at 99–221 (IINDPETVKL…CYSFAENCLL (123 aa)). Residues His170, His172, and Asp183 each contribute to the Zn(2+) site. The JAMM motif motif lies at 170 to 183 (HNHPSGITEPSYSD).

This sequence belongs to the UPF0758 family.

This Haemophilus influenzae (strain ATCC 51907 / DSM 11121 / KW20 / Rd) protein is UPF0758 protein HI_0952.